A 181-amino-acid chain; its full sequence is Dehydration-responsive element-binding protein 1E (181 aa).

The Nuclear localization signal motif lies at 14 to 26 (KKRAGRRIFKETR). The segment at residues 29–86 (IYRGVRRRDGDKWVCEVREPIHQRRVWLGTYPTADMAARAHDVAVLALRGRSACLNFS) is a DNA-binding region (AP2/ERF).

Belongs to the AP2/ERF transcription factor family. ERF subfamily.

The protein localises to the nucleus. Transcriptional activator that binds specifically to the DNA sequence 5'-[AG]CCGAC-3'. Binding to the C-repeat/DRE element mediates cold or dehydration-inducible transcription. CBF/DREB1 factors play a key role in freezing tolerance and cold acclimation. The sequence is that of Dehydration-responsive element-binding protein 1E (DREB1E) from Arabidopsis thaliana (Mouse-ear cress).